Consider the following 64-residue polypeptide: Copper-metallothionein (64 aa).

Ser-1 is subject to N-acetylserine. Residues Cys-7, Cys-11, Cys-16, Cys-18, Cys-22, Cys-24, Cys-28, Cys-30, Cys-33, Cys-36, Cys-38, Cys-43, Cys-45, Cys-49, Cys-55, Cys-57, Cys-61, and Cys-63 each contribute to the Cu(+) site.

The protein belongs to the metallothionein superfamily. Type 2 family.

Its function is as follows. The metallothioneins are involved in the cellular sequestration of toxic metal ions and regulation of essential trace elements. This isoform binds exclusively copper. The protein is Copper-metallothionein of Helix pomatia (Roman snail).